Consider the following 305-residue polypeptide: Ornithine carbamoyltransferase (305 aa).

Carbamoyl phosphate contacts are provided by residues 52–55 (STRT), Gln79, Arg103, and 130–133 (HPLQ). L-ornithine contacts are provided by residues Asn162, Asp224, and 228–229 (SM). Carbamoyl phosphate is bound by residues 264-265 (CL) and Arg292.

This sequence belongs to the aspartate/ornithine carbamoyltransferase superfamily. OTCase family.

It localises to the cytoplasm. It catalyses the reaction carbamoyl phosphate + L-ornithine = L-citrulline + phosphate + H(+). Its pathway is amino-acid biosynthesis; L-arginine biosynthesis; L-arginine from L-ornithine and carbamoyl phosphate: step 1/3. Reversibly catalyzes the transfer of the carbamoyl group from carbamoyl phosphate (CP) to the N(epsilon) atom of ornithine (ORN) to produce L-citrulline. This Pyrobaculum aerophilum (strain ATCC 51768 / DSM 7523 / JCM 9630 / CIP 104966 / NBRC 100827 / IM2) protein is Ornithine carbamoyltransferase.